The primary structure comprises 564 residues: Keratin, type II cytoskeletal 6A (564 aa).

Residues 1-11 show a composition bias toward low complexity; the sequence is MASTSTTIRSH. Positions 1–23 are disordered; the sequence is MASTSTTIRSHSSSRRGFSANSA. Alanine 2 is modified (N-acetylalanine). Positions 2–162 are head; that stretch reads ASTSTTIRSH…DPTIQRVRAE (161 aa). Positions 163–198 are coil 1A; that stretch reads EREQIKTLNNKFASFIDKVRFLEQQNKVLETKWTLL. Residues 163–476 enclose the IF rod domain; it reads EREQIKTLNN…KLLEGEECRL (314 aa). The interval 199-217 is linker 1; it reads QEQGTKTVRQNLEPLFEQY. The segment at 218 to 309 is coil 1B; that stretch reads INNLRRQLDS…ALYDAELSQM (92 aa). Positions 310-333 are linker 12; that stretch reads QTHISDTSVVLSMDNNRNLDLDSI. Residues 334 to 472 form a coil 2 region; sequence IAEVKAQYEE…ATYRKLLEGE (139 aa). The interval 473–564 is tail; it reads ECRLNGEGVG…SSSSRKSYKH (92 aa).

Belongs to the intermediate filament family. Heterodimer of a type I and a type II keratin. KRT6 isomers associate with KRT16 and/or KRT17. Interacts with TCHP. Expressed in the corneal epithelium (at protein level).

Epidermis-specific type I keratin involved in wound healing. Involved in the activation of follicular keratinocytes after wounding, while it does not play a major role in keratinocyte proliferation or migration. Participates in the regulation of epithelial migration by inhibiting the activity of SRC during wound repair. The protein is Keratin, type II cytoskeletal 6A (KRT6A) of Homo sapiens (Human).